We begin with the raw amino-acid sequence, 232 residues long: Ornithine carbamoyltransferase (232 aa).

Carbamoyl phosphate contacts are provided by residues Q15, R39, and 66 to 69 (HPTQ). L-ornithine-binding positions include N99, D163, and 167 to 168 (SM). Residues 204–207 (HCLP) and T232 each bind carbamoyl phosphate.

It belongs to the aspartate/ornithine carbamoyltransferase superfamily. OTCase family.

The protein localises to the cytoplasm. The enzyme catalyses carbamoyl phosphate + L-ornithine = L-citrulline + phosphate + H(+). The protein operates within amino-acid biosynthesis; L-arginine biosynthesis; L-arginine from L-ornithine and carbamoyl phosphate: step 1/3. In terms of biological role, reversibly catalyzes the transfer of the carbamoyl group from carbamoyl phosphate (CP) to the N(epsilon) atom of ornithine (ORN) to produce L-citrulline. This Neisseria sicca protein is Ornithine carbamoyltransferase (argF).